We begin with the raw amino-acid sequence, 1052 residues long: Fibroblast growth factor receptor homolog 2 (1052 aa).

An N-terminal signal peptide occupies residues 1 to 19 (MAKVPITLVMIIAIVSAAA). Residues 20–600 (DLGCDYGHHR…EIYALLHAHP (581 aa)) are Extracellular-facing. Ig-like C2-type domains are found at residues 23 to 117 (CDYG…IASF), 124 to 230 (PALP…PTQL), and 240 to 340 (PMLK…RTVA). C30 and C90 are oxidised to a cystine. N99, N137, N175, N181, N249, and N257 each carry an N-linked (GlcNAc...) asparagine glycan. A disulfide bond links C164 and C217. The cysteines at positions 262 and 329 are disulfide-linked. The span at 358–372 (TTTTTVASPIPTAST) shows a compositional bias: low complexity. The tract at residues 358–393 (TTTTTVASPIPTASTGEDNDDDVENPAAEASGGVGP) is disordered. Ig-like C2-type domains are found at residues 393-478 (PPVF…FSVQ) and 487-585 (PIIV…RVVS). The cysteines at positions 416 and 462 are disulfide-linked. 9 N-linked (GlcNAc...) asparagine glycosylation sites follow: N423, N444, N494, N500, N526, N541, N546, N555, and N576. The cysteines at positions 507 and 566 are disulfide-linked. Residues 601-626 (LGFTLAAITIVALFLLGSAFITFMLR) traverse the membrane as a helical segment. At 627–1052 (RLRREKLLKL…LRYQYTYKFN (426 aa)) the chain is on the cytoplasmic side. Positions 712–1000 (LSLGSILGEG…ELVESFDGIL (289 aa)) constitute a Protein kinase domain. ATP-binding positions include 718 to 726 (LGEGAFGRV) and K748. D864 serves as the catalytic Proton acceptor. Y895 carries the post-translational modification Phosphotyrosine; by autocatalysis. Residues 1017-1038 (PMLETPPSSGDEDDGSDTETFR) form a disordered region.

This sequence belongs to the protein kinase superfamily. Tyr protein kinase family. Fibroblast growth factor receptor subfamily. As to expression, during embryogenesis, expression is seen in mesoderm, endodermal precursor cells, CNS midline cells and trachea and salivary duct ectodermal cells.

The protein resides in the membrane. It carries out the reaction L-tyrosyl-[protein] + ATP = O-phospho-L-tyrosyl-[protein] + ADP + H(+). Functionally, may be required for patterning of muscle precursor cells: generation of mesodermal and endodermal layers, invaginations of various types of cells, and CNS formation. Essential for the ability of the migrating tracheal and midline cells to recognize external guiding cues. The polypeptide is Fibroblast growth factor receptor homolog 2 (btl) (Drosophila melanogaster (Fruit fly)).